Consider the following 301-residue polypeptide: tRNA pseudouridine synthase B (301 aa).

Asp38 serves as the catalytic Nucleophile.

It belongs to the pseudouridine synthase TruB family. Type 1 subfamily.

The catalysed reaction is uridine(55) in tRNA = pseudouridine(55) in tRNA. Its function is as follows. Responsible for synthesis of pseudouridine from uracil-55 in the psi GC loop of transfer RNAs. This Ehrlichia canis (strain Jake) protein is tRNA pseudouridine synthase B.